We begin with the raw amino-acid sequence, 256 residues long: Trans-aconitate 2-methyltransferase (256 aa).

This sequence belongs to the methyltransferase superfamily. Tam family.

It is found in the cytoplasm. It carries out the reaction trans-aconitate + S-adenosyl-L-methionine = (E)-3-(methoxycarbonyl)pent-2-enedioate + S-adenosyl-L-homocysteine. Its function is as follows. Catalyzes the S-adenosylmethionine monomethyl esterification of trans-aconitate. The polypeptide is Trans-aconitate 2-methyltransferase (Rhodopseudomonas palustris (strain HaA2)).